Here is a 142-residue protein sequence, read N- to C-terminus: Large ribosomal subunit protein uL13c (142 aa).

The protein belongs to the universal ribosomal protein uL13 family. In terms of assembly, part of the 50S ribosomal subunit.

It is found in the plastid. The protein localises to the chloroplast. The protein is Large ribosomal subunit protein uL13c of Porphyra purpurea (Red seaweed).